A 137-amino-acid polypeptide reads, in one-letter code: Large ribosomal subunit protein uL16 (137 aa).

The protein belongs to the universal ribosomal protein uL16 family. In terms of assembly, part of the 50S ribosomal subunit.

Its function is as follows. Binds 23S rRNA and is also seen to make contacts with the A and possibly P site tRNAs. The protein is Large ribosomal subunit protein uL16 of Afipia carboxidovorans (strain ATCC 49405 / DSM 1227 / KCTC 32145 / OM5) (Oligotropha carboxidovorans).